The primary structure comprises 354 residues: Kelch domain-containing protein 8B (354 aa).

8 Kelch repeats span residues 1 to 31 (MSAG…HQDE), 32 to 79 (HLLV…VLGK), 81 to 127 (VLVV…ERDG), 128 to 175 (MVYA…LHGN), 176 to 222 (KIYV…MAEG), 224 to 281 (VFSL…SLGG), 282 to 329 (HIVA…QAGP), and 331 to 354 (LFVI…RDGV).

The protein localises to the cytoplasm. The protein resides in the midbody. Its function is as follows. Involved in pinching off the separated nuclei at the cleavage furrow and in cytokinesis. Required for mitotic integrity and maintenance of chromosomal stability. Protects cells against mitotic errors, centrosomal amplification, micronucleus formation and aneuploidy. Plays a key role of midbody function involving abscission of the daughter cells during cytokinesis and appropriate chromosomal and nuclear segregation into the daughter cells. This Pongo abelii (Sumatran orangutan) protein is Kelch domain-containing protein 8B (KLHDC8B).